Here is a 407-residue protein sequence, read N- to C-terminus: E3 ubiquitin-protein ligase TRIM13 (407 aa).

Residues 10-58 (CPICCSLFDDPRVLPCSHNFCKKCLEGILEGSVRNSLWRPAPFKCPTCR) form an RING-type zinc finger. The B box-type zinc-finger motif lies at 89-131 (PKMPVCKGHLGQPLNIFCLTDMQLICGICATRGEHTKHVFCSI). C94, H97, C117, and H123 together coordinate Zn(2+). Positions 172 to 200 (LQLLTKDSDKVKEFFEKLQHTLDQKKNEI) form a coiled coil. The helical transmembrane segment at 317 to 337 (LFLLILLLGLVIVFGPTMFLE) threads the bilayer.

This sequence belongs to the TRIM/RBCC family. Interacts (via C-terminal domain) with VCP. Interacts with AKT1; the interaction ubiquitinates AKT1 and leads to its proteasomal degradation. Interacts with MDM2; the interaction ubiquitinates AKT1 and leads to its proteasomal degradation. Interacts with p62/SQSTM1. Interacts with TRAF6. Interacts with IKBKG/NEMO. Post-translationally, auto-ubiquitinated; requires the RING-type zinc finger. Auto-polyubiquitination leads to proteasomal degradation.

It is found in the endoplasmic reticulum membrane. The enzyme catalyses S-ubiquitinyl-[E2 ubiquitin-conjugating enzyme]-L-cysteine + [acceptor protein]-L-lysine = [E2 ubiquitin-conjugating enzyme]-L-cysteine + N(6)-ubiquitinyl-[acceptor protein]-L-lysine.. The protein operates within protein modification; protein ubiquitination. Its function is as follows. Endoplasmic reticulum (ER) membrane anchored E3 ligase involved in the retrotranslocation and turnover of membrane and secretory proteins from the ER through a set of processes named ER-associated degradation (ERAD). This process acts on misfolded proteins as well as in the regulated degradation of correctly folded proteins. Enhances ionizing radiation-induced p53/TP53 stability and apoptosis via ubiquitinating MDM2 and AKT1 and decreasing AKT1 kinase activity through MDM2 and AKT1 proteasomal degradation. Regulates ER stress-induced autophagy, and may act as a tumor suppressor. Also plays a role in innate immune response by stimulating NF-kappa-B activity in the TLR2 signaling pathway. Ubiquitinates TRAF6 via the 'Lys-29'-linked polyubiquitination chain resulting in NF-kappa-B activation. Participates as well in T-cell receptor-mediated NF-kappa-B activation. In the presence of TNF, modulates the IKK complex by regulating IKBKG/NEMO ubiquitination leading to the repression of NF-kappa-B. The chain is E3 ubiquitin-protein ligase TRIM13 (TRIM13) from Homo sapiens (Human).